A 520-amino-acid chain; its full sequence is GMP synthase [glutamine-hydrolyzing] (520 aa).

Residues 9–202 (KILILDFGSQ…VRKICGCSGQ (194 aa)) enclose the Glutamine amidotransferase type-1 domain. Catalysis depends on C86, which acts as the Nucleophile. Residues H176 and E178 contribute to the active site. Residues 203–395 (WTPGHIIDDA…LGLPHQMVWR (193 aa)) enclose the GMPS ATP-PPase domain. 230-236 (SGGVDSS) contacts ATP.

In terms of assembly, homodimer.

It catalyses the reaction XMP + L-glutamine + ATP + H2O = GMP + L-glutamate + AMP + diphosphate + 2 H(+). It functions in the pathway purine metabolism; GMP biosynthesis; GMP from XMP (L-Gln route): step 1/1. In terms of biological role, catalyzes the synthesis of GMP from XMP. The protein is GMP synthase [glutamine-hydrolyzing] of Geobacter metallireducens (strain ATCC 53774 / DSM 7210 / GS-15).